We begin with the raw amino-acid sequence, 196 residues long: 7-methyl-GTP pyrophosphatase (196 aa).

Asp-72 (proton acceptor) is an active-site residue.

This sequence belongs to the Maf family. YceF subfamily. The cofactor is a divalent metal cation.

It is found in the cytoplasm. It carries out the reaction N(7)-methyl-GTP + H2O = N(7)-methyl-GMP + diphosphate + H(+). In terms of biological role, nucleoside triphosphate pyrophosphatase that hydrolyzes 7-methyl-GTP (m(7)GTP). May have a dual role in cell division arrest and in preventing the incorporation of modified nucleotides into cellular nucleic acids. This Neisseria meningitidis serogroup B (strain ATCC BAA-335 / MC58) protein is 7-methyl-GTP pyrophosphatase.